Here is an 851-residue protein sequence, read N- to C-terminus: ATP-dependent DNA helicase DDX31 (851 aa).

Residues 1 to 196 are disordered; sequence MAPDLASQRH…STSDRNQEER (196 aa). Positions 230–259 match the Q motif motif; the sequence is AAFHELGLHPHLISTINTVLKMSSMTSVQK. Residues 262–443 enclose the Helicase ATP-binding domain; that stretch reads IPVLLEGRDA…DISLHDPVSI (182 aa). 275–282 lines the ATP pocket; it reads SQTGSGKT. The short motif at 388–391 is the DEAD box element; it reads DEAD. The Helicase C-terminal domain occupies 480–659; the sequence is SLKQHVTVVP…VSEIKMEDIL (180 aa). Disordered stretches follow at residues 762–784 and 804–851; these read KKRKAHVKRPDLHKKTQSKHSLA and KQNA…SQKV. At arginine 828 the chain carries Omega-N-methylarginine. Residues 841–851 show a composition bias toward basic and acidic residues; the sequence is VQRDSKTSQKV.

It belongs to the DEAD box helicase family. DDX31/DBP7 subfamily. Interacts with NPM1; this interaction prevents interaction between NPM1 and HDM2. As to expression, weakly or undetectably expressed in normal organs. Up-regulated in renal cell carcinoma.

It is found in the nucleus. Its subcellular location is the nucleolus. It catalyses the reaction ATP + H2O = ADP + phosphate + H(+). In terms of biological role, may have DNA helicase activity and RNA helicase activity. Probably have ssDNA and RNA dependent ATPase activity. Plays a role in ribosome biogenesis and TP53/p53 regulation through its interaction with NPM1. This Homo sapiens (Human) protein is ATP-dependent DNA helicase DDX31.